The chain runs to 117 residues: MDMRVPAQLLGLLLLWLPDTRCDIQMTQSPSSLSASVGDRVTITCRASQGISNYLAWYQQKPGKVPKLLIYAASTLQSGVPSRFSGSGSGTDFTLTISSLQPEDVATYYCQKYNSAP.

Positions 1–22 (MDMRVPAQLLGLLLLWLPDTRC) are cleaved as a signal peptide. Residues 23–45 (DIQMTQSPSSLSASVGDRVTITC) form a framework-1 region. The 95-residue stretch at 23-117 (DIQMTQSPSS…YYCQKYNSAP (95 aa)) folds into the Ig-like domain. A disulfide bond links cysteine 45 and cysteine 110. A complementarity-determining-1 region spans residues 46 to 56 (RASQGISNYLA). The interval 57-71 (WYQQKPGKVPKLLIY) is framework-2. Positions 72–78 (AASTLQS) are complementarity-determining-2. The interval 79–110 (GVPSRFSGSGSGTDFTLTISSLQPEDVATYYC) is framework-3. A complementarity-determining-3 region spans residues 111–117 (QKYNSAP).

As to quaternary structure, immunoglobulins are composed of two identical heavy chains and two identical light chains; disulfide-linked.

It localises to the secreted. The protein resides in the cell membrane. In terms of biological role, v region of the variable domain of immunoglobulin light chains that participates in the antigen recognition. Immunoglobulins, also known as antibodies, are membrane-bound or secreted glycoproteins produced by B lymphocytes. In the recognition phase of humoral immunity, the membrane-bound immunoglobulins serve as receptors which, upon binding of a specific antigen, trigger the clonal expansion and differentiation of B lymphocytes into immunoglobulins-secreting plasma cells. Secreted immunoglobulins mediate the effector phase of humoral immunity, which results in the elimination of bound antigens. The antigen binding site is formed by the variable domain of one heavy chain, together with that of its associated light chain. Thus, each immunoglobulin has two antigen binding sites with remarkable affinity for a particular antigen. The variable domains are assembled by a process called V-(D)-J rearrangement and can then be subjected to somatic hypermutations which, after exposure to antigen and selection, allow affinity maturation for a particular antigen. This Homo sapiens (Human) protein is Immunoglobulin kappa variable 1-27.